Reading from the N-terminus, the 566-residue chain is Insulinoma-associated protein 2 (566 aa).

The interval 1 to 20 (MPRGFLVKRTKRTGGLYRVR) is SNAG domain. A disordered region spans residues 32 to 117 (QGAPPFLEEA…PSPSPAKPAG (86 aa)). The span at 103–113 (GPSPSPSPSPA) shows a compositional bias: pro residues. The C2H2-type 1; atypical zinc finger occupies 263–283 (FICQLCKEQYADPFALAQHRC). The C2H2-type 2 zinc finger occupies 291-313 (YRCPECDKVFSCPANLASHRRWH). Residues 310–418 (RRWHKPRPAA…RRVPVPGSTS (109 aa)) are disordered. Low complexity predominate over residues 318-348 (AAANAATVSSADGKPPSSSSSSSRDSGAIAS). The span at 352-369 (EGKENSRIERTADQHPQA) shows a compositional bias: basic and acidic residues. 3 consecutive C2H2-type zinc fingers follow at residues 426–448 (FVCP…LSTH), 470–492 (FACP…RLWH), and 525–548 (FSCK…NKCH).

As to expression, expressed in heart, liver, skeletal muscle, kidney and pancreas, and, to a lesser extent, in brain, lung and spleen. In the pancreas, expressed in islet cells, including insulin- and glucagon-producing alpha- and beta-cells, but not in acinar cells (at protein level). Detected in adrenal glands, particularly in the deeper layer of the cortex (at protein level).

Its subcellular location is the cytoplasm. It localises to the nucleus. Functionally, may function as a growth suppressor or tumor suppressor in liver cells and in certain neurons. This is Insulinoma-associated protein 2 (INSM2) from Homo sapiens (Human).